The sequence spans 277 residues: 4-hydroxy-tetrahydrodipicolinate reductase (277 aa).

Position 9-14 (9-14 (GATGRM)) interacts with NAD(+). NADP(+) is bound at residue K37. Residue 75–77 (GTS) coordinates NAD(+). H132 functions as the Proton donor/acceptor in the catalytic mechanism. The active-site Proton donor is K136. 142–143 (GT) contributes to the (S)-2,3,4,5-tetrahydrodipicolinate binding site. 2 disordered regions span residues 154 to 173 (ARGA…ARGQ) and 247 to 277 (ERAA…VTSA). Low complexity predominate over residues 250–265 (AQAAAGDAPSGPVDDG).

It belongs to the DapB family.

Its subcellular location is the cytoplasm. It carries out the reaction (S)-2,3,4,5-tetrahydrodipicolinate + NAD(+) + H2O = (2S,4S)-4-hydroxy-2,3,4,5-tetrahydrodipicolinate + NADH + H(+). The catalysed reaction is (S)-2,3,4,5-tetrahydrodipicolinate + NADP(+) + H2O = (2S,4S)-4-hydroxy-2,3,4,5-tetrahydrodipicolinate + NADPH + H(+). The protein operates within amino-acid biosynthesis; L-lysine biosynthesis via DAP pathway; (S)-tetrahydrodipicolinate from L-aspartate: step 4/4. Its function is as follows. Catalyzes the conversion of 4-hydroxy-tetrahydrodipicolinate (HTPA) to tetrahydrodipicolinate. The protein is 4-hydroxy-tetrahydrodipicolinate reductase of Clavibacter michiganensis subsp. michiganensis (strain NCPPB 382).